Here is a 438-residue protein sequence, read N- to C-terminus: Probable D-serine dehydratase (438 aa).

Residue Lys-114 is modified to N6-(pyridoxal phosphate)lysine.

The protein belongs to the serine/threonine dehydratase family. DsdA subfamily. It depends on pyridoxal 5'-phosphate as a cofactor.

It carries out the reaction D-serine = pyruvate + NH4(+). This chain is Probable D-serine dehydratase, found in Histophilus somni (strain 2336) (Haemophilus somnus).